The sequence spans 382 residues: Galactokinase (382 aa).

34–37 (EHTD) provides a ligand contact to substrate. 124-130 (GAGLSSS) contributes to the ATP binding site. Serine 130 and glutamate 162 together coordinate Mg(2+). Aspartate 174 (proton acceptor) is an active-site residue. Substrate is bound at residue tyrosine 223.

The protein belongs to the GHMP kinase family. GalK subfamily.

It is found in the cytoplasm. It catalyses the reaction alpha-D-galactose + ATP = alpha-D-galactose 1-phosphate + ADP + H(+). It functions in the pathway carbohydrate metabolism; galactose metabolism. In terms of biological role, catalyzes the transfer of the gamma-phosphate of ATP to D-galactose to form alpha-D-galactose-1-phosphate (Gal-1-P). The polypeptide is Galactokinase (Erwinia tasmaniensis (strain DSM 17950 / CFBP 7177 / CIP 109463 / NCPPB 4357 / Et1/99)).